The sequence spans 314 residues: Dihydroorotate dehydrogenase (fumarate) (314 aa).

Residues lysine 46, 70 to 74 (NSMGL), and asparagine 130 contribute to the substrate site. 46-47 (KS) lines the FMN pocket. Asparagine 130 contacts FMN. Residues serine 132 and cysteine 133 each act as nucleophile in the active site. FMN contacts are provided by lysine 167 and isoleucine 195. Residue 196 to 197 (NS) coordinates substrate. FMN-binding positions include glycine 224, 252 to 253 (GG), and 274 to 275 (GT).

Belongs to the dihydroorotate dehydrogenase family. Type 1 subfamily. Homodimer. It depends on FMN as a cofactor.

The protein resides in the cytoplasm. The enzyme catalyses (S)-dihydroorotate + fumarate = orotate + succinate. It participates in pyrimidine metabolism; UMP biosynthesis via de novo pathway. Catalyzes the conversion of dihydroorotate to orotate with fumarate as the electron acceptor. This chain is Dihydroorotate dehydrogenase (fumarate) (URA1), found in Saccharomyces mikatae (Yeast).